The primary structure comprises 261 residues: Putative hydro-lyase Sfum_3393 (261 aa).

The protein belongs to the D-glutamate cyclase family.

The polypeptide is Putative hydro-lyase Sfum_3393 (Syntrophobacter fumaroxidans (strain DSM 10017 / MPOB)).